The following is a 103-amino-acid chain: Protein E7 (103 aa).

Residues Met-1–Ile-45 are E7 terminal domain. Residues Leu-27–Glu-31 carry the LXCXE motif; interaction with host RB1 and TMEM173/STING motif. A zinc finger lies at Cys-56–Cys-94. The Nuclear export signal signature appears at Ile-76–Thr-84.

Belongs to the papillomaviridae E7 protein family. In terms of assembly, homodimer. Homooligomer. Interacts with host RB1; this interaction induces dissociation of RB1-E2F1 complex thereby disrupting RB1 activity. Interacts with host EP300; this interaction represses EP300 transcriptional activity. Interacts with protein E2; this interaction inhibits E7 oncogenic activity. Interacts with host TMEM173/STING; this interaction impairs the ability of TMEM173/STING to sense cytosolic DNA and promote the production of type I interferon (IFN-alpha and IFN-beta). Post-translationally, highly phosphorylated.

It is found in the host cytoplasm. The protein localises to the host nucleus. In terms of biological role, plays a role in viral genome replication by driving entry of quiescent cells into the cell cycle. Stimulation of progression from G1 to S phase allows the virus to efficiently use the cellular DNA replicating machinery to achieve viral genome replication. E7 protein has both transforming and trans-activating activities. Induces the disassembly of the E2F1 transcription factor from RB1, with subsequent transcriptional activation of E2F1-regulated S-phase genes. Interferes with host histone deacetylation mediated by HDAC1 and HDAC2, leading to transcription activation. Also plays a role in the inhibition of both antiviral and antiproliferative functions of host interferon alpha. Interaction with host TMEM173/STING impairs the ability of TMEM173/STING to sense cytosolic DNA and promote the production of type I interferon (IFN-alpha and IFN-beta). The polypeptide is Protein E7 (Homo sapiens (Human)).